Reading from the N-terminus, the 845-residue chain is Matrin-3 (845 aa).

An N-acetylserine modification is found at serine 2. Lysine 3 carries the post-translational modification N6-acetyllysine; alternate. Residue lysine 3 forms a Glycyl lysine isopeptide (Lys-Gly) (interchain with G-Cter in SUMO2); alternate linkage. Phosphoserine is present on residues serine 4, serine 9, serine 14, serine 22, serine 41, serine 118, and serine 126. Residues lysine 132 and lysine 146 each participate in a glycyl lysine isopeptide (Lys-Gly) (interchain with G-Cter in SUMO2) cross-link. 2 disordered regions span residues arginine 147–proline 174 and aspartate 187–tyrosine 213. Threonine 150 is modified (phosphothreonine). Serine 157 carries the post-translational modification Phosphoserine. The residue at position 158 (tyrosine 158) is a Phosphotyrosine. Residues arginine 160–proline 174 are compositionally biased toward basic and acidic residues. Phosphoserine occurs at positions 164, 188, and 195. The span at aspartate 201–tyrosine 213 shows a compositional bias: basic and acidic residues. Tyrosine 202 carries the phosphotyrosine modification. 3 positions are modified to phosphoserine: serine 206, serine 208, and serine 211. Tyrosine 219 carries the phosphotyrosine modification. Serine 234 carries the phosphoserine modification. Lysine 245 is covalently cross-linked (Glycyl lysine isopeptide (Lys-Gly) (interchain with G-Cter in SUMO2)). The residue at position 264 (serine 264) is a Phosphoserine. Lysine 269 participates in a covalent cross-link: Glycyl lysine isopeptide (Lys-Gly) (interchain with G-Cter in SUMO2). Serine 275 carries the phosphoserine modification. A disordered region spans residues proline 342–valine 394. Positions arginine 398 to lysine 473 constitute an RRM 1 domain. Glycyl lysine isopeptide (Lys-Gly) (interchain with G-Cter in SUMO2) cross-links involve residues lysine 478, lysine 487, and lysine 491. The RRM 2 domain occupies arginine 496–lysine 571. Residues serine 509 and serine 511 each carry the phosphoserine modification. Lysine 515 participates in a covalent cross-link: Glycyl lysine isopeptide (Lys-Gly) (interchain with G-Cter in SUMO2). Lysine 522 bears the N6-acetyllysine; alternate mark. Lysine 522 participates in a covalent cross-link: Glycyl lysine isopeptide (Lys-Gly) (interchain with G-Cter in SUMO2); alternate. Residue serine 533 is modified to Phosphoserine. Residues lysine 554 and lysine 555 each participate in a glycyl lysine isopeptide (Lys-Gly) (interchain with G-Cter in SUMO2) cross-link. Lysine 571 is subject to N6-acetyllysine. A disordered region spans residues lysine 588 to asparagine 785. Residues serine 596, serine 598, serine 604, and serine 606 each carry the phosphoserine modification. The segment covering aspartate 600 to glutamine 643 has biased composition (basic and acidic residues). Glycyl lysine isopeptide (Lys-Gly) (interchain with G-Cter in SUMO2) cross-links involve residues lysine 617 and lysine 630. The span at glutamate 653 to alanine 665 shows a compositional bias: acidic residues. Phosphoserine occurs at positions 654, 671, 673, and 674. Threonine 679 carries the post-translational modification Phosphothreonine. Serine 689 is modified (phosphoserine). The segment covering serine 689–alanine 704 has biased composition (basic and acidic residues). Residues serine 708–aspartate 716 carry the Nuclear localization signal motif. Residues lysine 717 and lysine 734 each participate in a glycyl lysine isopeptide (Lys-Gly) (interchain with G-Cter in SUMO2) cross-link. Threonine 739 is modified (phosphothreonine). Serine 745, serine 757, and serine 760 each carry phosphoserine. Residues aspartate 765–arginine 778 show a composition bias toward basic and acidic residues. Residue lysine 768 forms a Glycyl lysine isopeptide (Lys-Gly) (interchain with G-Cter in SUMO2) linkage. The Matrin-type zinc-finger motif lies at phenylalanine 799 to lysine 830. At lysine 834 the chain carries N6-acetyllysine; alternate. Lysine 834 is covalently cross-linked (Glycyl lysine isopeptide (Lys-Gly) (interchain with G-Cter in SUMO2); alternate).

In terms of assembly, part of a complex consisting of SFPQ, NONO and MATR3. Interacts with AGO1 and AGO2. Part of a complex composed at least of ASH2L, EMSY, HCFC1, HSPA8, CCAR2, MATR3, MKI67, RBBP5, TUBB2A, WDR5 and ZNF335; this complex may have a histone H3-specific methyltransferase activity. Interacts with TARDBP. Part of the HDP-RNP complex composed of at least HEXIM1, PRKDC, XRCC5, XRCC6, paraspeckle proteins (SFPQ, NONO, PSPC1, RBM14, and MATR3) and NEAT1 RNA. Interacts with FUS. Interacts with IGF2BP1. Interacts with IGF2BP2 and IGF2BP3. Interacts with RBPMS.

The protein resides in the nucleus matrix. In terms of biological role, may play a role in transcription or may interact with other nuclear matrix proteins to form the internal fibrogranular network. In association with the SFPQ-NONO heteromer may play a role in nuclear retention of defective RNAs. Plays a role in the regulation of DNA virus-mediated innate immune response by assembling into the HDP-RNP complex, a complex that serves as a platform for IRF3 phosphorylation and subsequent innate immune response activation through the cGAS-STING pathway. Binds to N6-methyladenosine (m6A)-containing mRNAs and contributes to MYC stability by binding to m6A-containing MYC mRNAs. May bind to specific miRNA hairpins. The polypeptide is Matrin-3 (Matr3) (Rattus norvegicus (Rat)).